Reading from the N-terminus, the 185-residue chain is MKQLLDFIPLILFFITYKLGGVREAAIVLVVATILQIVILKWKYGTVEKQQKIMASAVVFFGLLTAYFNEIRYLQWKVTIINGLFAIVLLIAQFQFKTPLIKKLLGKELQLPEKAWNTLNFGWAIFFIICMLVNIYISHNMSEEAWVDFKSFGIIGMTVIATIISGVYIYRYLPKDGSNSKDGEK.

5 helical membrane passes run 19 to 39 (LGGV…QIVI), 53 to 73 (IMAS…EIRY), 76 to 96 (WKVT…QFQF), 118 to 138 (TLNF…IYIS), and 149 to 169 (FKSF…GVYI).

This sequence belongs to the YciB family.

It localises to the cell inner membrane. In terms of biological role, plays a role in cell envelope biogenesis, maintenance of cell envelope integrity and membrane homeostasis. The sequence is that of Inner membrane-spanning protein YciB from Haemophilus influenzae (strain PittEE).